The primary structure comprises 278 residues: S-formylglutathione hydrolase YeiG (278 aa).

Catalysis depends on charge relay system residues Ser145, Asp223, and His256.

Belongs to the esterase D family.

It catalyses the reaction S-formylglutathione + H2O = formate + glutathione + H(+). Functionally, serine hydrolase involved in the detoxification of formaldehyde. Hydrolyzes S-formylglutathione to glutathione and formate. In Escherichia coli (strain UTI89 / UPEC), this protein is S-formylglutathione hydrolase YeiG (yeiG).